A 121-amino-acid chain; its full sequence is Small ribosomal subunit protein uS13 (121 aa).

The disordered stretch occupies residues 91–121; sequence HRRGLPVRGQKTKNNARTRKGPVKTVANKKK.

It belongs to the universal ribosomal protein uS13 family. In terms of assembly, part of the 30S ribosomal subunit. Forms a loose heterodimer with protein S19. Forms two bridges to the 50S subunit in the 70S ribosome.

Functionally, located at the top of the head of the 30S subunit, it contacts several helices of the 16S rRNA. In the 70S ribosome it contacts the 23S rRNA (bridge B1a) and protein L5 of the 50S subunit (bridge B1b), connecting the 2 subunits; these bridges are implicated in subunit movement. Contacts the tRNAs in the A and P-sites. The polypeptide is Small ribosomal subunit protein uS13 (Staphylococcus haemolyticus (strain JCSC1435)).